Consider the following 309-residue polypeptide: MVDYYEVLGLQRYASPEDIKKAYHKVALKWHPDKNPENKEEAERKFKEVAEAYEVLSNDEKRDIYDKYGTEGLNGGGSHFDDECEYGFTFHKPDDVFKEIFHERDPFSFHFFEDSLEDLLNRPGSSYGNRNRDAGYFFSTASEYPIFEKFSSYDTGYTSQGSLGHEGLTSFSSLAFDNSGMDNYISVTTSDKIVNGRNINTKKIIESDQEREAEDNGELTFFLVNSVANEEGFAKECSWRTQSFNNYSPNSHSSKHVSQYTFVDNDEGGISWVTSNRDPPIFSAGVKEGGKRKKKKRKEVQKKSTKRNC.

The region spanning 3-69 (DYYEVLGLQR…EKRDIYDKYG (67 aa)) is the J domain. Positions 282-309 (FSAGVKEGGKRKKKKRKEVQKKSTKRNC) are disordered. The span at 290–309 (GKRKKKKRKEVQKKSTKRNC) shows a compositional bias: basic residues.

Probably acts as a co-chaperone. The polypeptide is DnaJ homolog subfamily B member 7 (DNAJB7) (Homo sapiens (Human)).